A 304-amino-acid polypeptide reads, in one-letter code: Dihydroorotate dehydrogenase B (NAD(+)), catalytic subunit (304 aa).

FMN contacts are provided by residues S21 and 45-46 (KA). Residues K45 and 69-73 (NAIGL) contribute to the substrate site. N99 and N127 together coordinate FMN. N127 provides a ligand contact to substrate. The active-site Nucleophile is the C130. 2 residues coordinate FMN: K165 and I191. 192 to 193 (NT) provides a ligand contact to substrate. Residues G217, 243–244 (GG), and 265–266 (GT) contribute to the FMN site.

Belongs to the dihydroorotate dehydrogenase family. Type 1 subfamily. As to quaternary structure, heterotetramer of 2 PyrK and 2 PyrD type B subunits. FMN serves as cofactor.

The protein resides in the cytoplasm. The enzyme catalyses (S)-dihydroorotate + NAD(+) = orotate + NADH + H(+). It participates in pyrimidine metabolism; UMP biosynthesis via de novo pathway; orotate from (S)-dihydroorotate (NAD(+) route): step 1/1. Catalyzes the conversion of dihydroorotate to orotate with NAD(+) as electron acceptor. This Listeria monocytogenes serovar 1/2a (strain ATCC BAA-679 / EGD-e) protein is Dihydroorotate dehydrogenase B (NAD(+)), catalytic subunit (pyrD).